The sequence spans 1454 residues: Probable cleavage and polyadenylation specificity factor subunit 1 (1454 aa).

The disordered stretch occupies residues 810–843 (EEKEKKAKQTAAQEKEKETEKKKDDAKNEEDQVN). Residues 812-843 (KEKKAKQTAAQEKEKETEKKKDDAKNEEDQVN) show a composition bias toward basic and acidic residues.

It belongs to the CPSF1 family. In terms of assembly, CPSF is a heterotetramer composed of four distinct subunits 160 (cpsf-1), 100 (cpsf-2), 70 (cpsf-3), and 30 kDa (cpsf-4).

The protein resides in the nucleus. Functionally, CPSF plays a key role in pre-mRNA 3'-end formation, recognizing the AAUAAA signal sequence and interacting with poly(A)polymerase and other factors to bring about cleavage and poly(A) addition. This subunit is involved in the RNA recognition step of the polyadenylation reaction. The polypeptide is Probable cleavage and polyadenylation specificity factor subunit 1 (Caenorhabditis briggsae).